A 389-amino-acid chain; its full sequence is Cuticlin-3 (389 aa).

Positions methionine 1–alanine 19 are cleaved as a signal peptide. Residues isoleucine 20–serine 354 lie on the Extracellular side of the membrane. The 246-residue stretch at glutamate 33–glycine 278 folds into the ZP domain. N-linked (GlcNAc...) asparagine glycosylation is present at asparagine 284. Residues valine 355–valine 375 form a helical membrane-spanning segment. Residues serine 376–cysteine 389 lie on the Cytoplasmic side of the membrane.

It localises to the cell membrane. In terms of biological role, plays a role in alae formation in L1 larvae. The chain is Cuticlin-3 from Caenorhabditis elegans.